The following is a 557-amino-acid chain: Copine-6 (557 aa).

2 C2 domains span residues 2-127 (SDPE…TKPL) and 134-263 (TAGK…MQWD). 5 residues coordinate Ca(2+): Asp167, Asp173, Asp229, Asp231, and Asp237. The interval 244–303 (STFQEMQEGTANPGQEMQWDCINPKYRDKKKNYKSSGTVVLAQCTVEKVHTFLDYIMGGC) is linker region. Positions 306-526 (SFTVAIDFTA…ALAKRVLAEV (221 aa)) constitute a VWFA domain.

The protein belongs to the copine family. As to quaternary structure, interacts (via second C2 domain) with OS9 (via C-terminus); this interaction occurs in a calcium-dependent manner in vitro. May interact with NECAB1. The cofactor is Ca(2+).

The protein resides in the cytoplasm. It is found in the cell membrane. Its subcellular location is the endosome. It localises to the cytoplasmic vesicle. The protein localises to the clathrin-coated vesicle. The protein resides in the perikaryon. It is found in the cell projection. Its subcellular location is the dendrite. In terms of biological role, calcium-dependent phospholipid-binding protein that plays a role in calcium-mediated intracellular processes. Binds phospholipid membranes in a calcium-dependent manner. Plays a role in dendrite formation by melanocytes. The sequence is that of Copine-6 from Pongo abelii (Sumatran orangutan).